A 246-amino-acid polypeptide reads, in one-letter code: DNA polymerase sliding clamp 3 (246 aa).

This sequence belongs to the PCNA family. In terms of assembly, the subunits circularize to form a toroid; DNA passes through its center. Replication factor C (RFC) is required to load the toroid on the DNA. Forms dimeric complexes with PCNA1 and PCNA2, and trimeric complexes with PCNA123 and PCNA323; does not form homotrimers. Crystal structures show a heterotetramer of 2 PCNA2 and 2 PCNA3, which would be large enough to clamp a Holliday junction.

Sliding clamp subunit that acts as a moving platform for DNA processing. Responsible for tethering the catalytic subunit of DNA polymerase and other proteins to DNA during high-speed replication. Both trimeric complexes inhibit DNA ligase and both 3'-5' and 5'-3' activity of Hel308 (Hjm) helicase, but stimulate Hjc, the Holliday junction cleavage enzyme. In Sulfurisphaera tokodaii (strain DSM 16993 / JCM 10545 / NBRC 100140 / 7) (Sulfolobus tokodaii), this protein is DNA polymerase sliding clamp 3.